Consider the following 185-residue polypeptide: Photosystem I assembly protein Ycf4 (185 aa).

The next 2 helical transmembrane spans lie at 21–43 (NFFW…ISSY) and 63–85 (GVVM…CTIL).

Belongs to the Ycf4 family.

Its subcellular location is the plastid. The protein localises to the chloroplast thylakoid membrane. In terms of biological role, seems to be required for the assembly of the photosystem I complex. In Aegilops crassa (Persian goatgrass), this protein is Photosystem I assembly protein Ycf4.